We begin with the raw amino-acid sequence, 361 residues long: MTRAFNFSAGPATLPESVLRQAQAEMLDWHGSGASIVEMSHRGAEFMSVAAEAEADLRRLLDIPEDYAVLFLSGGATTQQALIPLNFAAPGQRADYVVSGHWGKTAVKQAGVYVDVNIAASSEANGYRELPARADWQLSPDAAYVHLTANETIHGVEFRDVPDTGNVPLIADFSSSIASEPLDVRRYGVIYAGAQKNLGPVGIAVMIIRLDLLERSGQPRADIFDYRSHVARDSMLNTPPTWNWYLAGLVFKWMLAEGGVAEFAKRNAAKAALVYGAIDGSGGFYRNEVAHAARSRMNIPFFLPDAELDARFVAEAKAAGLLALKGHKVVGGIRASLYNAMPLAGAEALVAFMADFQQRHG.

Arg42 is an L-glutamate binding site. Pyridoxal 5'-phosphate-binding positions include 76 to 77 (AT), Trp102, Thr152, Asp172, and Gln195. Residue Lys196 is modified to N6-(pyridoxal phosphate)lysine. 237 to 238 (NT) contributes to the pyridoxal 5'-phosphate binding site.

Belongs to the class-V pyridoxal-phosphate-dependent aminotransferase family. SerC subfamily. As to quaternary structure, homodimer. Pyridoxal 5'-phosphate is required as a cofactor.

Its subcellular location is the cytoplasm. It carries out the reaction O-phospho-L-serine + 2-oxoglutarate = 3-phosphooxypyruvate + L-glutamate. The catalysed reaction is 4-(phosphooxy)-L-threonine + 2-oxoglutarate = (R)-3-hydroxy-2-oxo-4-phosphooxybutanoate + L-glutamate. It functions in the pathway amino-acid biosynthesis; L-serine biosynthesis; L-serine from 3-phospho-D-glycerate: step 2/3. The protein operates within cofactor biosynthesis; pyridoxine 5'-phosphate biosynthesis; pyridoxine 5'-phosphate from D-erythrose 4-phosphate: step 3/5. Functionally, catalyzes the reversible conversion of 3-phosphohydroxypyruvate to phosphoserine and of 3-hydroxy-2-oxo-4-phosphonooxybutanoate to phosphohydroxythreonine. This Stenotrophomonas maltophilia (strain R551-3) protein is Phosphoserine aminotransferase.